The sequence spans 1086 residues: Isoleucine--tRNA ligase (1086 aa).

A 'HIGH' region motif is present at residues 53 to 63; sequence PFANGLPHYGH. Residues 624 to 628 carry the 'KMSKS' region motif; sequence KLSKR. ATP is bound at residue lysine 627.

It belongs to the class-I aminoacyl-tRNA synthetase family. IleS type 2 subfamily. Monomer. Zn(2+) is required as a cofactor.

It is found in the cytoplasm. The enzyme catalyses tRNA(Ile) + L-isoleucine + ATP = L-isoleucyl-tRNA(Ile) + AMP + diphosphate. Functionally, catalyzes the attachment of isoleucine to tRNA(Ile). As IleRS can inadvertently accommodate and process structurally similar amino acids such as valine, to avoid such errors it has two additional distinct tRNA(Ile)-dependent editing activities. One activity is designated as 'pretransfer' editing and involves the hydrolysis of activated Val-AMP. The other activity is designated 'posttransfer' editing and involves deacylation of mischarged Val-tRNA(Ile). This Rickettsia typhi (strain ATCC VR-144 / Wilmington) protein is Isoleucine--tRNA ligase.